Reading from the N-terminus, the 231-residue chain is Ribonuclease HII (231 aa).

An RNase H type-2 domain is found at 33-222 (WPVAGADEAG…FREAQEQPLA (190 aa)). A divalent metal cation is bound by residues Asp-39, Glu-40, and Asp-130.

It belongs to the RNase HII family. Mn(2+) serves as cofactor. Requires Mg(2+) as cofactor.

The protein resides in the cytoplasm. It carries out the reaction Endonucleolytic cleavage to 5'-phosphomonoester.. Functionally, endonuclease that specifically degrades the RNA of RNA-DNA hybrids. The protein is Ribonuclease HII of Sinorhizobium fredii (strain NBRC 101917 / NGR234).